A 117-amino-acid chain; its full sequence is Large ribosomal subunit protein bL20c (117 aa).

It belongs to the bacterial ribosomal protein bL20 family.

The protein resides in the plastid. It is found in the chloroplast. Its function is as follows. Binds directly to 23S ribosomal RNA and is necessary for the in vitro assembly process of the 50S ribosomal subunit. It is not involved in the protein synthesizing functions of that subunit. In Vitis vinifera (Grape), this protein is Large ribosomal subunit protein bL20c.